Here is a 606-residue protein sequence, read N- to C-terminus: Kelch repeat and BTB domain-containing protein 8 (606 aa).

Residues T55 to E123 enclose the BTB domain. Residues C158–Q258 form the BACK domain. 5 Kelch repeats span residues E342–G396, K397–D447, I449–D487, S488–V534, and T546–A593.

The protein belongs to the KBTBD8 family. In terms of assembly, component of the BCR(KBTBD8) E3 ubiquitin ligase complex.

Its subcellular location is the cytoplasm. The protein resides in the cytoskeleton. The protein localises to the spindle. It is found in the golgi apparatus. Substrate-specific adapter of a BCR (BTB-CUL3-RBX1) E3 ubiquitin ligase complex that acts as a regulator of neural crest specification. The BCR(KBTBD8) complex acts by mediating monoubiquitination of target proteins. The sequence is that of Kelch repeat and BTB domain-containing protein 8 (kbtbd8) from Xenopus tropicalis (Western clawed frog).